A 287-amino-acid chain; its full sequence is Ethanolamine ammonia-lyase small subunit (287 aa).

Val168, Glu189, and Cys218 together coordinate adenosylcob(III)alamin.

This sequence belongs to the EutC family. As to quaternary structure, the basic unit is a heterodimer which dimerizes to form tetramers. The heterotetramers trimerize; 6 large subunits form a core ring with 6 small subunits projecting outwards. Requires adenosylcob(III)alamin as cofactor.

The protein resides in the bacterial microcompartment. The catalysed reaction is ethanolamine = acetaldehyde + NH4(+). Its pathway is amine and polyamine degradation; ethanolamine degradation. Its function is as follows. Catalyzes the deamination of various vicinal amino-alcohols to oxo compounds. Allows this organism to utilize ethanolamine as the sole source of nitrogen and carbon in the presence of external vitamin B12. The polypeptide is Ethanolamine ammonia-lyase small subunit (Pseudomonas syringae pv. tomato (strain ATCC BAA-871 / DC3000)).